A 387-amino-acid chain; its full sequence is (S)-8-oxocitronellyl enol synthase (387 aa).

Residues 36–38 (TGI), 64–65 (RR), 82–83 (DI), 106–107 (SW), and Q140 each bind NADP(+). Active-site residues include K144 and Y177. 2 residues coordinate substrate: K144 and Y177. Residues Y177 and 211 to 213 (SMM) contribute to the NADP(+) site.

It belongs to the short-chain dehydrogenases/reductases (SDR) family. Highly divergent. As to expression, expressed in leaves.

It catalyses the reaction (S)-8-oxocitronellyl enol + NADP(+) = (6E)-8-oxogeranial + NADPH + H(+). The catalysed reaction is (S)-8-oxocitronellyl enol + NAD(+) = (6E)-8-oxogeranial + NADH + H(+). The enzyme catalyses (R)-8-oxocitronellyl enol + NADP(+) = (6E)-8-oxogeranial + NADPH + H(+). Functionally, iridoid synthase that catalyzes the first step in generation of the iridoid ring scaffold using the linear monoterpene (6E)-8-oxogeranial as substrate. Reduces 8-oxogeranial, generating an unstable product that is subsequently cyclized into several possible products, either non-enzymically or by dedicated cyclases. Iridoids comprise a large family of distinctive bicyclic monoterpenes that possess a wide range of pharmacological activities, including anticancer, anti-inflammatory, antifungal and antibacterial activities. In Antirrhinum majus (Garden snapdragon), this protein is (S)-8-oxocitronellyl enol synthase.